Here is a 116-residue protein sequence, read N- to C-terminus: Large ribosomal subunit protein bL17 (116 aa).

This sequence belongs to the bacterial ribosomal protein bL17 family. Part of the 50S ribosomal subunit. Contacts protein L32.

The chain is Large ribosomal subunit protein bL17 from Helicobacter pylori (strain G27).